A 99-amino-acid chain; its full sequence is NADH-quinone oxidoreductase subunit K (99 aa).

3 helical membrane passes run 3–23 (PDNYLYLSALLFTIGAAGVLL), 28–48 (IVMFMCVELMLNAGNLAFVTF), and 59–79 (VVAFFTMVVAACEVVIGLAII).

This sequence belongs to the complex I subunit 4L family. As to quaternary structure, NDH-1 is composed of 14 different subunits. Subunits NuoA, H, J, K, L, M, N constitute the membrane sector of the complex.

It is found in the cell membrane. The enzyme catalyses a quinone + NADH + 5 H(+)(in) = a quinol + NAD(+) + 4 H(+)(out). In terms of biological role, NDH-1 shuttles electrons from NADH, via FMN and iron-sulfur (Fe-S) centers, to quinones in the respiratory chain. The immediate electron acceptor for the enzyme in this species is believed to be a menaquinone. Couples the redox reaction to proton translocation (for every two electrons transferred, four hydrogen ions are translocated across the cytoplasmic membrane), and thus conserves the redox energy in a proton gradient. This Mycolicibacterium gilvum (strain PYR-GCK) (Mycobacterium gilvum (strain PYR-GCK)) protein is NADH-quinone oxidoreductase subunit K.